A 227-amino-acid chain; its full sequence is Large ribosomal subunit protein uL3 (227 aa).

A disordered region spans residues 146-167 (RGPMAHGSKFHRHQGSNGACSS).

Belongs to the universal ribosomal protein uL3 family. Part of the 50S ribosomal subunit. Forms a cluster with proteins L14 and L19.

One of the primary rRNA binding proteins, it binds directly near the 3'-end of the 23S rRNA, where it nucleates assembly of the 50S subunit. The protein is Large ribosomal subunit protein uL3 of Agathobacter rectalis (strain ATCC 33656 / DSM 3377 / JCM 17463 / KCTC 5835 / VPI 0990) (Eubacterium rectale).